We begin with the raw amino-acid sequence, 261 residues long: Glucose 1-dehydrogenase 1 (261 aa).

11 to 35 (VITGSSTGLGKAMAIRFATEKAKVV) serves as a coordination point for NADP(+). Substrate is bound at residue S145. The active-site Proton acceptor is the Y158.

Belongs to the short-chain dehydrogenases/reductases (SDR) family. In terms of assembly, homotetramer.

It catalyses the reaction D-glucose + NAD(+) = D-glucono-1,5-lactone + NADH + H(+). The catalysed reaction is D-glucose + NADP(+) = D-glucono-1,5-lactone + NADPH + H(+). Its function is as follows. May play some role in spore germination. The sequence is that of Glucose 1-dehydrogenase 1 (gdhI) from Priestia megaterium (Bacillus megaterium).